The chain runs to 679 residues: Methionine--tRNA ligase (679 aa).

The short motif at 15–25 (PYANGPVHIGH) is the 'HIGH' region element. Residues C147, C150, C160, and C163 each contribute to the Zn(2+) site. The 'KMSKS' region motif lies at 332-336 (KISTS). T335 provides a ligand contact to ATP. Positions 578-679 (DFMKLDIRVG…KEVKPGSEVK (102 aa)) constitute a tRNA-binding domain.

This sequence belongs to the class-I aminoacyl-tRNA synthetase family. MetG type 1 subfamily. Homodimer. Requires Zn(2+) as cofactor.

The protein localises to the cytoplasm. It carries out the reaction tRNA(Met) + L-methionine + ATP = L-methionyl-tRNA(Met) + AMP + diphosphate. Its function is as follows. Is required not only for elongation of protein synthesis but also for the initiation of all mRNA translation through initiator tRNA(fMet) aminoacylation. The protein is Methionine--tRNA ligase of Parabacteroides distasonis (strain ATCC 8503 / DSM 20701 / CIP 104284 / JCM 5825 / NCTC 11152).